The primary structure comprises 711 residues: Ribosomal RNA large subunit methyltransferase K/L (711 aa).

One can recognise a THUMP domain in the interval Leu43 to Phe154.

Belongs to the methyltransferase superfamily. RlmKL family.

It is found in the cytoplasm. The catalysed reaction is guanosine(2445) in 23S rRNA + S-adenosyl-L-methionine = N(2)-methylguanosine(2445) in 23S rRNA + S-adenosyl-L-homocysteine + H(+). The enzyme catalyses guanosine(2069) in 23S rRNA + S-adenosyl-L-methionine = N(2)-methylguanosine(2069) in 23S rRNA + S-adenosyl-L-homocysteine + H(+). In terms of biological role, specifically methylates the guanine in position 2445 (m2G2445) and the guanine in position 2069 (m7G2069) of 23S rRNA. This is Ribosomal RNA large subunit methyltransferase K/L from Shewanella loihica (strain ATCC BAA-1088 / PV-4).